Here is a 288-residue protein sequence, read N- to C-terminus: Rhox homeobox family member 2B (288 aa).

The tract at residues 16–136 is disordered; sequence SPAVDDEKEL…GLEPGNAQQP (121 aa). Positions 39–48 are enriched in acidic residues; that stretch reads VKEEEEDAQP. The segment covering 68-80 has biased composition (basic and acidic residues); it reads GEEKDGGGEEKDG. The segment at residues 134 to 193 is a DNA-binding region (homeobox); sequence QQPNVHAFTPLQLQELECIFQREQFPSEFLRRRLARSMNVTELAVQIWFENRRAKWRRHQ. The Nuclear localization signal motif lies at 186–195; the sequence is RAKWRRHQRA.

The protein belongs to the paired-like homeobox family. PEPP subfamily. In terms of tissue distribution, expressed in testis, mainly expressed in germ cells, but also detected in somatic cells such as Sertoli cells, Leydig cells and peritubular cells.

The protein localises to the nucleus. Its function is as follows. Transcription factor maybe involved in reproductive processes. Modulates expression of target genes encoding proteins involved in processes relevant to spermatogenesis. This chain is Rhox homeobox family member 2B, found in Homo sapiens (Human).